We begin with the raw amino-acid sequence, 876 residues long: Protein argonaute 17 (876 aa).

Residues 246–338 (PVVDYVAQLL…LPLEVCKIAE (93 aa)) enclose the PAZ domain. The region spanning 514 to 834 (LLIVILPNNN…LSSRARCYIK (321 aa)) is the Piwi domain. A disordered region spans residues 839–859 (GDSTSHTSLPSEEDSSAASET).

This sequence belongs to the argonaute family. Ago subfamily.

Its function is as follows. Probably involved in the RNA silencing pathway. May bind to short RNAs such as microRNAs (miRNAs) or short interfering RNAs (siRNAs), and represses the translation of mRNAs which are complementary to them. The polypeptide is Protein argonaute 17 (AGO17) (Oryza sativa subsp. japonica (Rice)).